The sequence spans 405 residues: L-carnitine CoA-transferase (405 aa).

CoA is bound by residues lysine 97 and arginine 104. The active-site Nucleophile is aspartate 169.

The protein belongs to the CoA-transferase III family. CaiB subfamily. Homodimer.

Its subcellular location is the cytoplasm. The catalysed reaction is crotonobetainyl-CoA + (R)-carnitine = crotonobetaine + (R)-carnitinyl-CoA. It catalyses the reaction 4-(trimethylamino)butanoyl-CoA + (R)-carnitine = (R)-carnitinyl-CoA + 4-(trimethylamino)butanoate. Its pathway is amine and polyamine metabolism; carnitine metabolism. In terms of biological role, catalyzes the reversible transfer of the CoA moiety from gamma-butyrobetainyl-CoA to L-carnitine to generate L-carnitinyl-CoA and gamma-butyrobetaine. Is also able to catalyze the reversible transfer of the CoA moiety from gamma-butyrobetainyl-CoA or L-carnitinyl-CoA to crotonobetaine to generate crotonobetainyl-CoA. This chain is L-carnitine CoA-transferase, found in Shigella flexneri serotype 5b (strain 8401).